We begin with the raw amino-acid sequence, 83 residues long: Snake venom metalloproteinase BnP1 (83 aa).

The Peptidase M12B domain maps to 8–83 (SYIELAVVAD…NPQCIINQPI (76 aa)). The Ca(2+) site is built by Glu11, Cys77, and Asn80.

It belongs to the venom metalloproteinase (M12B) family. P-I subfamily. In terms of assembly, monomer. Requires Zn(2+) as cofactor. As to expression, expressed by the venom gland.

The protein localises to the secreted. With respect to regulation, inhibited by EDTA. Functionally, this protein is a zinc protease from snake venom that is devoid of significant myotoxic and hemorrhagic activities. It hydrolyzes the Aalpha-chain and more slowly the Bbeta-chain of fibrin and fibrinogen, without affecting the gamma-chains. It induces cell detachment and a apoptosis (anoikis) in endothelial cells. This chain is Snake venom metalloproteinase BnP1, found in Bothrops pauloensis (Neuwied's lancehead).